Here is a 356-residue protein sequence, read N- to C-terminus: S-adenosylmethionine:tRNA ribosyltransferase-isomerase (356 aa).

This sequence belongs to the QueA family. Monomer.

The protein resides in the cytoplasm. It carries out the reaction 7-aminomethyl-7-carbaguanosine(34) in tRNA + S-adenosyl-L-methionine = epoxyqueuosine(34) in tRNA + adenine + L-methionine + 2 H(+). It participates in tRNA modification; tRNA-queuosine biosynthesis. Functionally, transfers and isomerizes the ribose moiety from AdoMet to the 7-aminomethyl group of 7-deazaguanine (preQ1-tRNA) to give epoxyqueuosine (oQ-tRNA). This chain is S-adenosylmethionine:tRNA ribosyltransferase-isomerase, found in Escherichia fergusonii (strain ATCC 35469 / DSM 13698 / CCUG 18766 / IAM 14443 / JCM 21226 / LMG 7866 / NBRC 102419 / NCTC 12128 / CDC 0568-73).